The following is a 379-amino-acid chain: Beta sliding clamp (379 aa).

Belongs to the beta sliding clamp family. In terms of assembly, forms a ring-shaped head-to-tail homodimer around DNA which binds and tethers DNA polymerases and other proteins to the DNA. The DNA replisome complex has a single clamp-loading complex (3 tau and 1 each of delta, delta', psi and chi subunits) which binds 3 Pol III cores (1 core on the leading strand and 2 on the lagging strand) each with a beta sliding clamp dimer. Additional proteins in the replisome are other copies of gamma, psi and chi, Ssb, DNA helicase and RNA primase.

The protein localises to the cytoplasm. Functionally, confers DNA tethering and processivity to DNA polymerases and other proteins. Acts as a clamp, forming a ring around DNA (a reaction catalyzed by the clamp-loading complex) which diffuses in an ATP-independent manner freely and bidirectionally along dsDNA. Initially characterized for its ability to contact the catalytic subunit of DNA polymerase III (Pol III), a complex, multichain enzyme responsible for most of the replicative synthesis in bacteria; Pol III exhibits 3'-5' exonuclease proofreading activity. The beta chain is required for initiation of replication as well as for processivity of DNA replication. The sequence is that of Beta sliding clamp (dnaN) from Rickettsia bellii (strain RML369-C).